Here is an 862-residue protein sequence, read N- to C-terminus: uncharacterized protein (862 aa).

The N-terminal stretch at 1-25 (MKPRPYSVFLFLHIVFYSLLSAVNG) is a signal peptide. Residues 26–61 (SPSLDYFETCSNFVPRAGIPTFSPYAVIKNFDEVNR) are Lumenal-facing. The helical transmembrane segment at 62–82 (MYYIQVVGNLSGVITIVGGNG) threads the bilayer. Topologically, residues 83–187 (SHIHAASVYS…STTLYYFYPV (105 aa)) are cytoplasmic. The helical transmembrane segment at 188–208 (ISYLVVVSLAYVSFSIIYALF) threads the bilayer. Topologically, residues 209-230 (LNPWTGSLDPFKSIFNFNMDPD) are lumenal. A helical membrane pass occupies residues 231-250 (ALRLTSLGFFDFVQYLQFAV). At 251-256 (STAQVS) the chain is on the cytoplasmic side. Residues 257–277 (VMFPKFYINIMAALSWGTALF) traverse the membrane as a helical segment. The Lumenal portion of the chain corresponds to 278–329 (RFPIFSEPAEYQFADFADLSVASSSYADYLPKSYGMYSFLDSIGIGTACWLP). The helical transmembrane segment at 330-350 (FLIVMVIYLFAALFVALLVIF) threads the bilayer. Over 351–372 (LKWLMSRIFNETIAETRWDTWS) the chain is Cytoplasmic. The helical transmembrane segment at 373-393 (FIAGSLIRLYFLTYFPTVAYM) threads the bilayer. Over 394–404 (SFQFVAPPTGY) the chain is Lumenal. Residues 405–425 (EIIPVLWFIFFGIFIPVYLYM) traverse the membrane as a helical segment. Topologically, residues 426–457 (NLAFVEPSSKLLEDQTYLHLFGSIYNSFREER) are cytoplasmic. The helical transmembrane segment at 458–480 (VMFWIFPIAVQFMRGITVGVIGS) threads the bilayer. The Lumenal segment spans residues 481–483 (SGS). A helical membrane pass occupies residues 484 to 503 (AQLAIFFILEVANVVAYAYV). The Cytoplasmic portion of the chain corresponds to 504-514 (RPHFPQTSMNT). Residues 515 to 535 (LNTFISTMRLITVILMIPLDP) traverse the membrane as a helical segment. Residues 536–545 (RLKVLGISRD) are Lumenal-facing. The chain crosses the membrane as a helical span at residues 546-566 (LLAYAILFIHIMVCILFLLLS). Residues 567–862 (TQRFMEVSAR…AESAWSIPHP (296 aa)) lie on the Cytoplasmic side of the membrane. A compositionally biased stretch (polar residues) spans 668–686 (QASSLVPSKNNTASSSSLM). 2 disordered regions span residues 668–717 (QASS…SVRK) and 815–862 (VLRS…IPHP). Over residues 689-700 (SPVTPSSPYSTS) the composition is skewed to low complexity. Basic and acidic residues predominate over residues 834–850 (EPSRDEQYSMERKKTDD).

This sequence belongs to the transient receptor potential (TRP) ion channel family.

The protein resides in the cytoplasm. It is found in the golgi apparatus membrane. This is an uncharacterized protein from Schizosaccharomyces pombe (strain 972 / ATCC 24843) (Fission yeast).